Reading from the N-terminus, the 341-residue chain is Tetraacyldisaccharide 4'-kinase (341 aa).

54–61 lines the ATP pocket; that stretch reads TVGGTGKT.

The protein belongs to the LpxK family.

It carries out the reaction a lipid A disaccharide + ATP = a lipid IVA + ADP + H(+). Its pathway is glycolipid biosynthesis; lipid IV(A) biosynthesis; lipid IV(A) from (3R)-3-hydroxytetradecanoyl-[acyl-carrier-protein] and UDP-N-acetyl-alpha-D-glucosamine: step 6/6. Functionally, transfers the gamma-phosphate of ATP to the 4'-position of a tetraacyldisaccharide 1-phosphate intermediate (termed DS-1-P) to form tetraacyldisaccharide 1,4'-bis-phosphate (lipid IVA). This Mesorhizobium japonicum (strain LMG 29417 / CECT 9101 / MAFF 303099) (Mesorhizobium loti (strain MAFF 303099)) protein is Tetraacyldisaccharide 4'-kinase.